The sequence spans 429 residues: UDP-N-acetylglucosamine 1-carboxyvinyltransferase (429 aa).

Phosphoenolpyruvate is bound at residue K22–N23. UDP-N-acetyl-alpha-D-glucosamine is bound at residue R102. C126 serves as the catalytic Proton donor. Position 126 is a 2-(S-cysteinyl)pyruvic acid O-phosphothioketal (C126). Residues K171–V174, D316, and I338 contribute to the UDP-N-acetyl-alpha-D-glucosamine site.

This sequence belongs to the EPSP synthase family. MurA subfamily.

The protein resides in the cytoplasm. It carries out the reaction phosphoenolpyruvate + UDP-N-acetyl-alpha-D-glucosamine = UDP-N-acetyl-3-O-(1-carboxyvinyl)-alpha-D-glucosamine + phosphate. It functions in the pathway cell wall biogenesis; peptidoglycan biosynthesis. Cell wall formation. Adds enolpyruvyl to UDP-N-acetylglucosamine. This chain is UDP-N-acetylglucosamine 1-carboxyvinyltransferase, found in Xanthobacter autotrophicus (strain ATCC BAA-1158 / Py2).